The sequence spans 89 residues: Bombyxin B-2 (89 aa).

A signal peptide spans 1 to 19; it reads MKTSVMFMLVFVISLMCSS. 3 cysteine pairs are disulfide-bonded: C29–C75, C41–C88, and C74–C79. A propeptide spans 48 to 66 (c peptide like); the sequence is SGAQYAPYFWTRQYLGSRG.

The protein belongs to the insulin family. In terms of assembly, heterodimer of a B chain and an A chain linked by two disulfide bonds.

It localises to the secreted. Functionally, brain peptide responsible for activation of prothoracic glands to produce ecdysone in insects. The sequence is that of Bombyxin B-2 (BBXB2) from Bombyx mori (Silk moth).